Consider the following 297-residue polypeptide: Signal-transducing adaptor protein 1 (297 aa).

A PH domain is found at Pro-25–Glu-121. Tyr-170 is subject to Phosphotyrosine. The 95-residue stretch at Glu-179–Ala-273 folds into the SH2 domain. The segment at His-271–Ala-297 is disordered.

In terms of assembly, interacts with URI1; the interaction is phosphorylation-dependent occurs in a growth-dependent manner. Interacts with KIT and CSF1R. In terms of processing, phosphorylated on tyrosine by TEC. Phosphorylated on tyrosine by KIT. In terms of tissue distribution, expression restricted to the bone marrow.

The protein resides in the nucleus. The protein localises to the cytoplasm. It is found in the mitochondrion. Its function is as follows. May function as an adapter molecule downstream of KIT in the proliferation or differentiation of hematopoietic stem cells. This chain is Signal-transducing adaptor protein 1 (Stap1), found in Mus musculus (Mouse).